A 131-amino-acid polypeptide reads, in one-letter code: Peptide methionine sulfoxide reductase MsrB (131 aa).

Residues Leu8–Arg130 form the MsrB domain. The Zn(2+) site is built by Cys47, Cys50, Cys96, and Cys99. Catalysis depends on Cys119, which acts as the Nucleophile.

It belongs to the MsrB Met sulfoxide reductase family. Requires Zn(2+) as cofactor.

The catalysed reaction is L-methionyl-[protein] + [thioredoxin]-disulfide + H2O = L-methionyl-(R)-S-oxide-[protein] + [thioredoxin]-dithiol. The polypeptide is Peptide methionine sulfoxide reductase MsrB (Pseudomonas putida (strain ATCC 47054 / DSM 6125 / CFBP 8728 / NCIMB 11950 / KT2440)).